Reading from the N-terminus, the 75-residue chain is Large ribosomal subunit protein bL31 (75 aa).

This sequence belongs to the bacterial ribosomal protein bL31 family. Type A subfamily. In terms of assembly, part of the 50S ribosomal subunit.

In terms of biological role, binds the 23S rRNA. The chain is Large ribosomal subunit protein bL31 from Rhodopseudomonas palustris (strain BisB5).